A 398-amino-acid polypeptide reads, in one-letter code: S-adenosylmethionine synthase (398 aa).

Residues 1–21 (MAANRRLFTSESVTEGHPDKM) form a disordered region. Position 17 (His17) interacts with ATP. Asp19 is a binding site for Mg(2+). A K(+)-binding site is contributed by Glu45. 2 residues coordinate L-methionine: Glu58 and Gln101. A flexible loop region spans residues 101-111 (QSADIAGGVNQ). Residues 177-179 (DGK), 244-245 (RF), Asp253, 259-260 (RK), Ala276, and Lys280 each bind ATP. Asp253 serves as a coordination point for L-methionine. Position 284 (Lys284) interacts with L-methionine.

It belongs to the AdoMet synthase family. As to quaternary structure, homotetramer; dimer of dimers. The cofactor is Mg(2+). Requires K(+) as cofactor.

The protein localises to the cytoplasm. It catalyses the reaction L-methionine + ATP + H2O = S-adenosyl-L-methionine + phosphate + diphosphate. It participates in amino-acid biosynthesis; S-adenosyl-L-methionine biosynthesis; S-adenosyl-L-methionine from L-methionine: step 1/1. Catalyzes the formation of S-adenosylmethionine (AdoMet) from methionine and ATP. The overall synthetic reaction is composed of two sequential steps, AdoMet formation and the subsequent tripolyphosphate hydrolysis which occurs prior to release of AdoMet from the enzyme. The chain is S-adenosylmethionine synthase from Oceanobacillus iheyensis (strain DSM 14371 / CIP 107618 / JCM 11309 / KCTC 3954 / HTE831).